A 387-amino-acid polypeptide reads, in one-letter code: Cytochrome b (387 aa).

The next 4 helical transmembrane spans lie at 32–52 (FGSLLACVLVVQIVTGILLAC), 76–98 (FLLRALHANGASFFFIFLYLHIG), 113–133 (TWNIGVIIFLLTIITAFLGYC), and 179–199 (FFSLHYLMPFVIAALSIMHLI). Heme b contacts are provided by histidine 82 and histidine 96. Residues histidine 183 and histidine 197 each contribute to the heme b site. Histidine 202 serves as a coordination point for a ubiquinone. The next 4 membrane-spanning stretches (helical) occupy residues 225–245 (FLIKDLITIFIFLLAINYMVF), 289–309 (QLGVVAMLLSILVLLLLPLLD), 321–341 (MGKFFFWCFVADFCILAWIGG), and 348–368 (FITIGAYATAFYFIYFFILIP).

This sequence belongs to the cytochrome b family. In terms of assembly, fungal cytochrome b-c1 complex contains 10 subunits; 3 respiratory subunits, 2 core proteins and 5 low-molecular weight proteins. Cytochrome b-c1 complex is a homodimer. Heme b is required as a cofactor.

It localises to the mitochondrion inner membrane. Functionally, component of the ubiquinol-cytochrome c reductase complex (complex III or cytochrome b-c1 complex) that is part of the mitochondrial respiratory chain. The b-c1 complex mediates electron transfer from ubiquinol to cytochrome c. Contributes to the generation of a proton gradient across the mitochondrial membrane that is then used for ATP synthesis. This chain is Cytochrome b (cob), found in Schizosaccharomyces octosporus (Fission yeast).